Here is a 789-residue protein sequence, read N- to C-terminus: Disintegrin and metalloproteinase domain-containing protein 1 (789 aa).

A signal peptide spans 1-68 (MSVAASASRS…LLIFLPSTLC (68 aa)). Residues 238-432 (KYVEMFVVVN…HRGACLLDRP (195 aa)) form the Peptidase M12B domain. N-linked (GlcNAc...) asparagine glycosylation is present at N259. 4 disulfides stabilise this stretch: C348–C427, C388–C411, C390–C396, and C497–C517. H373 contacts Zn(2+). E374 is a catalytic residue. Residues H377 and H383 each contribute to the Zn(2+) site. N410 is a glycosylation site (N-linked (GlcNAc...) asparagine). The region spanning 441 to 525 (DAHCGNGVVE…ECPANSYMQD (85 aa)) is the Disintegrin domain. The N-linked (GlcNAc...) asparagine glycan is linked to N633. One can recognise an EGF-like domain in the interval 666–700 (LQYDCHPQEMCHGNGVCNNFKHCHCDAGFSPPDCS). Disulfide bonds link C670-C682, C676-C688, and C690-C699. An N-linked (GlcNAc...) asparagine glycan is attached at N720. A helical membrane pass occupies residues 743 to 763 (VVVLVVPIFLIVLLCCLMLIA). Topologically, residues 764–789 (YLWSEVQEAVSPGSSSTTSSSESESD) are cytoplasmic.

In terms of assembly, heterodimer with ADAM2/fertilin subunit beta.

It is found in the membrane. Functionally, may be involved in sperm-egg fusion. The chain is Disintegrin and metalloproteinase domain-containing protein 1 (Adam1) from Rattus norvegicus (Rat).